We begin with the raw amino-acid sequence, 512 residues long: GMP synthase [glutamine-hydrolyzing] (512 aa).

In terms of domain architecture, Glutamine amidotransferase type-1 spans 5–195; that stretch reads GIVILDFGSQ…IFGIAKAEKN (191 aa). The Nucleophile role is filled by cysteine 82. Catalysis depends on residues histidine 169 and glutamate 171. The region spanning 196–387 is the GMPS ATP-PPase domain; the sequence is WSMENYIEST…LGIPDYMVDR (192 aa). 223-229 serves as a coordination point for ATP; that stretch reads SGGVDSS.

Homodimer.

It carries out the reaction XMP + L-glutamine + ATP + H2O = GMP + L-glutamate + AMP + diphosphate + 2 H(+). It participates in purine metabolism; GMP biosynthesis; GMP from XMP (L-Gln route): step 1/1. Functionally, catalyzes the synthesis of GMP from XMP. The sequence is that of GMP synthase [glutamine-hydrolyzing] from Fusobacterium nucleatum subsp. nucleatum (strain ATCC 25586 / DSM 15643 / BCRC 10681 / CIP 101130 / JCM 8532 / KCTC 2640 / LMG 13131 / VPI 4355).